Reading from the N-terminus, the 442-residue chain is Trigger factor (442 aa).

The PPIase FKBP-type domain occupies 165-250 (DDRVIIDFEG…LQKVMAPELP (86 aa)).

The protein belongs to the FKBP-type PPIase family. Tig subfamily.

It localises to the cytoplasm. The catalysed reaction is [protein]-peptidylproline (omega=180) = [protein]-peptidylproline (omega=0). Functionally, involved in protein export. Acts as a chaperone by maintaining the newly synthesized protein in an open conformation. Functions as a peptidyl-prolyl cis-trans isomerase. The chain is Trigger factor from Coxiella burnetii (strain CbuK_Q154) (Coxiella burnetii (strain Q154)).